The sequence spans 276 residues: Protease HtpX homolog (276 aa).

The helical transmembrane segment at Ile14–Phe34 threads the bilayer. His130 lines the Zn(2+) pocket. The active site involves Glu131. Residue His134 coordinates Zn(2+). 2 helical membrane-spanning segments follow: residues Val145 to Gly165 and Leu171 to Ile191. Glu196 provides a ligand contact to Zn(2+).

It belongs to the peptidase M48B family. Zn(2+) serves as cofactor.

Its subcellular location is the cell inner membrane. The chain is Protease HtpX homolog from Salinibacter ruber (strain DSM 13855 / M31).